The following is a 579-amino-acid chain: Cytochrome P450 monooxygenase prx9 (579 aa).

The chain crosses the membrane as a helical span at residues 6-25 (LPLGSFVGTTLLLFILYKLV). N-linked (GlcNAc...) asparagine glycans are attached at residues asparagine 194, asparagine 292, and asparagine 390. Residue cysteine 512 participates in heme binding.

This sequence belongs to the cytochrome P450 family. Heme is required as a cofactor.

The protein localises to the membrane. The protein operates within sesquiterpene biosynthesis. Its function is as follows. Cytochrome P450 monooxygenase; part of the gene cluster that mediates the biosynthesis of PR-toxin, a bicyclic sesquiterpene belonging to the eremophilane class and acting as a mycotoxin. The first step of the pathway is catalyzed by the aristolochene synthase which performs the cyclization of trans,trans-farnesyl diphosphate (FPP) to the bicyclic sesquiterpene aristolochene. Following the formation of aristolochene, the non-oxygenated aristolochene is converted to the trioxygenated intermediate eremofortin B, via 7-epi-neopetasone. This conversion appears to involve three enzymes, a hydroxysterol oxidase-like enzyme, the quinone-oxidase prx3 that forms the quinone-type-structure in the bicyclic nucleus of aristolochene with the C8-oxo group and the C-3 hydroxyl group, and the P450 monooxygenase prx9 that introduces the epoxide at the double bond between carbons 1 and 2. No monoxy or dioxy-intermediates have been reported to be released to the broth, so these three early oxidative reactions may be coupled together. Eremofortin B is further oxidized by another P450 monooxygenase, that introduces a second epoxide between carbons 7 and 11 prior to acetylation to eremofortin A by the acetyltransferase prx11. The second epoxidation may be performed by a second P450 monooxygenase. After the acetylation step, eremofortin A is converted to eremofortin C and then to PR-toxin. First the conversion of eremofortin A to eremofortin C proceeds by oxidation of the side chain of the molecule at C-12 and is catalyzed by the short-chain oxidoreductase prx1. The cytochrome P450 monooxygenase prx8 also plays a role in this step. The primary alcohol formed at C-12 is finally oxidized by the short-chain alcohol dehydrogenase prx4 that forms PR-toxin. In Penicillium rubens (strain ATCC 28089 / DSM 1075 / NRRL 1951 / Wisconsin 54-1255) (Penicillium chrysogenum), this protein is Cytochrome P450 monooxygenase prx9.